Consider the following 321-residue polypeptide: MMMEQECVDDSIRPRTLDDFIGQEDLRANLRVYLQAARGRGQAMDHTLFYGNPGLGKTTLAQIMASEMGVNMVCTSGPVLERSGDLAAILTNLGKGDLLFVDEIHRMPVAVEEVLYPAMEDFKLDLVIGQGPGARTVKIDLEPFTLVGATTRIGLLSSPLRDRFGIISRLEFYTPAELACIVKRTAGIMGVSLTEDGAVEIGRRSRGTPRIANRLLRRVRDFASVQNSAAVTAALASDALARMDVDELGLDQMDRKLLSVLIEHFAGGPVGVKTLAVACSEEVRTIEDIYEPYLIQCGFLKRTPRGRMATAKAYRHMNLLA.

The large ATPase domain (RuvB-L) stretch occupies residues 1–173; the sequence is MMMEQECVDD…FGIISRLEFY (173 aa). Residues Ile-12, Arg-13, Gly-54, Lys-57, Thr-58, Thr-59, 120-122, Arg-163, Tyr-173, and Arg-210 contribute to the ATP site; that span reads EDF. A Mg(2+)-binding site is contributed by Thr-58. The small ATPAse domain (RuvB-S) stretch occupies residues 174-244; sequence TPAELACIVK…LASDALARMD (71 aa). A head domain (RuvB-H) region spans residues 247–321; sequence ELGLDQMDRK…KAYRHMNLLA (75 aa). DNA is bound by residues Arg-302 and Arg-307.

It belongs to the RuvB family. In terms of assembly, homohexamer. Forms an RuvA(8)-RuvB(12)-Holliday junction (HJ) complex. HJ DNA is sandwiched between 2 RuvA tetramers; dsDNA enters through RuvA and exits via RuvB. An RuvB hexamer assembles on each DNA strand where it exits the tetramer. Each RuvB hexamer is contacted by two RuvA subunits (via domain III) on 2 adjacent RuvB subunits; this complex drives branch migration. In the full resolvosome a probable DNA-RuvA(4)-RuvB(12)-RuvC(2) complex forms which resolves the HJ.

The protein resides in the cytoplasm. The enzyme catalyses ATP + H2O = ADP + phosphate + H(+). In terms of biological role, the RuvA-RuvB-RuvC complex processes Holliday junction (HJ) DNA during genetic recombination and DNA repair, while the RuvA-RuvB complex plays an important role in the rescue of blocked DNA replication forks via replication fork reversal (RFR). RuvA specifically binds to HJ cruciform DNA, conferring on it an open structure. The RuvB hexamer acts as an ATP-dependent pump, pulling dsDNA into and through the RuvAB complex. RuvB forms 2 homohexamers on either side of HJ DNA bound by 1 or 2 RuvA tetramers; 4 subunits per hexamer contact DNA at a time. Coordinated motions by a converter formed by DNA-disengaged RuvB subunits stimulates ATP hydrolysis and nucleotide exchange. Immobilization of the converter enables RuvB to convert the ATP-contained energy into a lever motion, pulling 2 nucleotides of DNA out of the RuvA tetramer per ATP hydrolyzed, thus driving DNA branch migration. The RuvB motors rotate together with the DNA substrate, which together with the progressing nucleotide cycle form the mechanistic basis for DNA recombination by continuous HJ branch migration. Branch migration allows RuvC to scan DNA until it finds its consensus sequence, where it cleaves and resolves cruciform DNA. The sequence is that of Holliday junction branch migration complex subunit RuvB from Oleidesulfovibrio alaskensis (strain ATCC BAA-1058 / DSM 17464 / G20) (Desulfovibrio alaskensis).